A 343-amino-acid chain; its full sequence is Thromboxane A2 receptor (343 aa).

At 1–29 (MWPNGSSLGPCFRPTNITLEERRLIASPW) the chain is on the extracellular side. N-linked (GlcNAc...) asparagine glycosylation is found at asparagine 4 and asparagine 16. Residues 30 to 52 (FAASFCVVGLASNLLALSVLAGA) traverse the membrane as a helical segment. Over 53-66 (RQGGSHTRSSFLTF) the chain is Cytoplasmic. The chain crosses the membrane as a helical span at residues 67–87 (LCGLVLTDFLGLLVTGTIVVS). The Extracellular portion of the chain corresponds to 88–106 (QHAALFEWHAVDPGCRLCR). A disulfide bridge links cysteine 105 with cysteine 183. Residues 107 to 128 (FMGVVMIFFGLSPLLLGAAMAS) form a helical membrane-spanning segment. Residues 129 to 149 (ERYLGITRPFSRPAVASQRRA) are Cytoplasmic-facing. Residues 150–172 (WATVGLVWAAALALGLLPLLGVG) form a helical membrane-spanning segment. The Extracellular segment spans residues 173–193 (RYTVQYPGSWCFLTLGAESGD). A helical membrane pass occupies residues 194–219 (VAFGLLFSMLGGLSVGLSFLLNTVSV). Residues 220–246 (ATLCHVYHGQEAAQQRPRDSEVEMMAQ) are Cytoplasmic-facing. Residues 247–270 (LLGIMVVASVCWLPLLVFIAQTVL) form a helical membrane-spanning segment. The Extracellular segment spans residues 271–289 (RNPPAMSPAGQLSRTTEKE). Residues 290 to 311 (LLIYLRVATWNQILDPWVYILF) form a helical membrane-spanning segment. The Cytoplasmic portion of the chain corresponds to 312–343 (RRAVLRRLQPRLSTRPRSLSLQPQLTQRSGLQ). Phosphoserine is present on residues serine 329 and serine 331.

Belongs to the G-protein coupled receptor 1 family. Interacts with RPGRIP1L. Interacts with PSMA3. Interacts with RACK1; the interaction regulates TBXA2R cell surface expression.

Its subcellular location is the cell membrane. Functionally, receptor for thromboxane A2 (TXA2), a potent stimulator of platelet aggregation. The activity of this receptor is mediated by a G-protein that activates a phosphatidylinositol-calcium second messenger system. In the kidney, the binding of TXA2 to glomerular TP receptors causes intense vasoconstriction. Activates phospholipase C. In terms of biological role, activates adenylyl cyclase. Its function is as follows. Inhibits adenylyl cyclase. The sequence is that of Thromboxane A2 receptor (TBXA2R) from Homo sapiens (Human).